Reading from the N-terminus, the 225-residue chain is Glutathione S-transferase U2 (225 aa).

The GST N-terminal domain occupies 6–85 (ESVKLLGFWI…YIDQTWNNNP (80 aa)). Residues 16–17 (SP), 42–43 (KK), 56–57 (KV), and 69–70 (ES) contribute to the glutathione site. Residues 90–217 (DPYEKAMVRF…EKHIERMKKI (128 aa)) form the GST C-terminal domain. T151 carries the post-translational modification Phosphothreonine.

The protein belongs to the GST superfamily. Tau family.

The protein resides in the cytoplasm. It localises to the cytosol. The catalysed reaction is RX + glutathione = an S-substituted glutathione + a halide anion + H(+). May be involved in the conjugation of reduced glutathione to a wide number of exogenous and endogenous hydrophobic electrophiles and have a detoxification role against certain herbicides. The protein is Glutathione S-transferase U2 (GSTU2) of Arabidopsis thaliana (Mouse-ear cress).